A 152-amino-acid polypeptide reads, in one-letter code: Ribosome maturation factor RimP (152 aa).

Belongs to the RimP family.

Its subcellular location is the cytoplasm. Required for maturation of 30S ribosomal subunits. In Rubrobacter xylanophilus (strain DSM 9941 / JCM 11954 / NBRC 16129 / PRD-1), this protein is Ribosome maturation factor RimP.